Here is a 225-residue protein sequence, read N- to C-terminus: MMSRETASSEITPELLLRAYACGIFPMAESVDDPTLFWVEPKLRGVIPLESFRISSRLARTVRSDSFAVTVDTAFNAVIDGCAAPQPGRDNTWINRRIRELYIALHELGHCHSVEVWQGDELVGGLYGVRLGRAFFGESMFHIARDASKVALVHLVARLIAGGFVLLDTQFVTDHLRGFGAIEIPRRRYRALLDAALEGRADFAALPLDQPVPGTDALKIIADRA.

This sequence belongs to the L/F-transferase family.

The protein localises to the cytoplasm. The enzyme catalyses N-terminal L-lysyl-[protein] + L-leucyl-tRNA(Leu) = N-terminal L-leucyl-L-lysyl-[protein] + tRNA(Leu) + H(+). It carries out the reaction N-terminal L-arginyl-[protein] + L-leucyl-tRNA(Leu) = N-terminal L-leucyl-L-arginyl-[protein] + tRNA(Leu) + H(+). It catalyses the reaction L-phenylalanyl-tRNA(Phe) + an N-terminal L-alpha-aminoacyl-[protein] = an N-terminal L-phenylalanyl-L-alpha-aminoacyl-[protein] + tRNA(Phe). In terms of biological role, functions in the N-end rule pathway of protein degradation where it conjugates Leu, Phe and, less efficiently, Met from aminoacyl-tRNAs to the N-termini of proteins containing an N-terminal arginine or lysine. In Nitrobacter hamburgensis (strain DSM 10229 / NCIMB 13809 / X14), this protein is Leucyl/phenylalanyl-tRNA--protein transferase.